A 296-amino-acid polypeptide reads, in one-letter code: Endochitinase 3 (296 aa).

Positions 12 to 296 (HKLTVYWGAE…VKNGQLPEED (285 aa)) constitute a GH18 domain. N-linked (GlcNAc...) asparagine glycosylation is found at asparagine 32 and asparagine 152. Catalysis depends on glutamate 153, which acts as the Proton donor. N-linked (GlcNAc...) asparagine glycosylation is present at asparagine 228.

This sequence belongs to the glycosyl hydrolase 18 family. Chitinase class III subfamily.

Its subcellular location is the secreted. It carries out the reaction Random endo-hydrolysis of N-acetyl-beta-D-glucosaminide (1-&gt;4)-beta-linkages in chitin and chitodextrins.. In terms of biological role, secreted chitinase involved in the degradation of chitin, a component of the cell walls of fungi and exoskeletal elements of some animals (including worms and arthropods). Participates in the infection process and directly acts in the penetration process of the host cuticle. Involved in heat-shock adaptation. This is Endochitinase 3 (chi3) from Metarhizium anisopliae (Entomophthora anisopliae).